Reading from the N-terminus, the 398-residue chain is Meiotically up-regulated gene 126 protein (398 aa).

Disordered stretches follow at residues 30-81 (EEME…QRHR) and 119-260 (FESD…NSNS). 2 stretches are compositionally biased toward polar residues: residues 119–135 (FESD…NFPT) and 183–199 (VQEN…QEPQ). Residues 210–222 (QANQQETSSNQEE) are compositionally biased toward low complexity. Residues 224 to 236 (SFDRQETQDDKQK) are compositionally biased toward basic and acidic residues. Positions 248-260 (RNRNQATITNSNS) are enriched in polar residues. 4 consecutive transmembrane segments (helical) span residues 269 to 289 (IFVI…DLIE), 305 to 325 (IFLW…YLAL), 341 to 361 (GACF…CFLI), and 373 to 393 (LEIY…GAIY).

It is found in the membrane. In terms of biological role, has a role in meiosis. The chain is Meiotically up-regulated gene 126 protein (mug126) from Schizosaccharomyces pombe (strain 972 / ATCC 24843) (Fission yeast).